A 1434-amino-acid chain; its full sequence is Probable ATP-dependent DNA helicase HFM1 (1434 aa).

A Helicase ATP-binding domain is found at 289-476; it reads DDLLYTDRNF…WLSDGERPAV (188 aa). An ATP-binding site is contributed by 302 to 309; sequence APTGSGKT. A DEAH box motif is present at residues 410 to 413; sequence DEVH. In terms of domain architecture, Helicase C-terminal spans 514–718; that stretch reads KVYSVIRTYS…DVNIALDWIR (205 aa). One can recognise an SEC63 domain in the interval 775–1089; the sequence is PTEAGRLMAW…VGLDIHQKFT (315 aa). Positions 1110–1130 are disordered; sequence TDISHSDYSGRATATGSSKGM. Residues 1141-1156 form a C4-type zinc finger; the sequence is CHHHCKNKHACGHDCC. The segment at 1294–1333 is disordered; that stretch reads GFGDTRDSSLGGSKLPFQKSSSRFQRDNSNSFASSPGKPD. Over residues 1311-1327 the composition is skewed to polar residues; sequence QKSSSRFQRDNSNSFAS.

It belongs to the helicase family. SKI2 subfamily. The cofactor is Zn(2+).

The enzyme catalyses Couples ATP hydrolysis with the unwinding of duplex DNA by translocating in the 3'-5' direction.. It catalyses the reaction ATP + H2O = ADP + phosphate + H(+). Required for crossover formation and complete synapsis of homologous chromosomes during meiosis. This is Probable ATP-dependent DNA helicase HFM1 from Mus musculus (Mouse).